The chain runs to 106 residues: Replication restart protein PriB (106 aa).

Residues valine 4–aspartate 103 enclose the SSB domain.

This sequence belongs to the PriB family. In terms of assembly, homodimer. Interacts with PriA and DnaT. Component of the replication restart primosome. Primosome assembly occurs via a 'hand-off' mechanism. PriA binds to replication forks, subsequently PriB then DnaT bind; DnaT then displaces ssDNA to generate the helicase loading substrate.

Its function is as follows. Involved in the restart of stalled replication forks, which reloads the replicative helicase on sites other than the origin of replication; the PriA-PriB pathway is the major replication restart pathway. During primosome assembly it facilitates complex formation between PriA and DnaT on DNA; stabilizes PriA on DNA. Stimulates the DNA unwinding activity of PriA helicase. This Pectobacterium carotovorum subsp. carotovorum (strain PC1) protein is Replication restart protein PriB.